Reading from the N-terminus, the 126-residue chain is Small ribosomal subunit protein bS6 (126 aa).

Belongs to the bacterial ribosomal protein bS6 family.

In terms of biological role, binds together with bS18 to 16S ribosomal RNA. In Bordetella bronchiseptica (strain ATCC BAA-588 / NCTC 13252 / RB50) (Alcaligenes bronchisepticus), this protein is Small ribosomal subunit protein bS6.